A 602-amino-acid polypeptide reads, in one-letter code: MLFRFLALLPFVAGAFAEYKVHDDTFKPDYVLEATLDDIKINCVSRSSIVFNGTSPGPTIYLQEEQTTWIRVYNKIPDNNVTVHWHGLSQRAAPFSDGTPLVSQWPIPAGQFFDYEIRPEIGDAGSYFYHSHVGFQIVTAFGALIVRDARKPEYKYDGDIPLLVGDNYAAEDEVIEQGLLADPFKWSGEPQAITIQGNSGNKSFYEAPDSSCMPHVVHVDPGKTYRLRFISATALSMIKLGIEDHENLTVIEADGSYTKPAKIDHVQVSPGQRYSYLMKTKTSKEVCGGDKSQYWIRYESRDRPKVISGYALLKYRCDKNQKLPKSLPETSPIELSNSTADYLEYALEGLSEKNNQAFPKLSEVTRTVVIQINQILTTGAYVNGTLNGTVAWAQNGLPWKENVQAERRQVPYLIQIYENGTTPNYTLALEHHGFDPETKAFPAKVGEVLDIVWENNNGPTGGWDYHPMHVHGYHVYDLGSGNGTYNATENEAHFENFTPVLRDTTNLYRYAVKGVPHHTAGWRAWRIRITEENIGAWMMHCHIAQHQVMGMATVWVFGDAEQIRGKFPAPPYTQGYLTYGGSAYGTEDDQPWVNEYYSDKNN.

Residues 1–17 (MLFRFLALLPFVAGAFA) form the signal peptide. 2 consecutive Plastocyanin-like domains span residues 38–149 (DIKI…VRDA) and 160–317 (IPLL…KYRC). 2 N-linked (GlcNAc...) asparagine glycosylation sites follow: Asn-52 and Asn-80. His-84, His-86, His-130, and His-132 together coordinate Cu cation. 7 N-linked (GlcNAc...) asparagine glycosylation sites follow: Asn-201, Asn-247, Asn-337, Asn-383, Asn-387, Asn-419, and Asn-424. Positions 421–556 (TTPNYTLALE…QVMGMATVWV (136 aa)) constitute a Plastocyanin-like 3 domain. His-469 contacts Cu cation. Asn-482 and Asn-486 each carry an N-linked (GlcNAc...) asparagine glycan.

This sequence belongs to the multicopper oxidase family.

It participates in pigment biosynthesis. In terms of biological role, multicopper oxidase; part of the gene cluster that mediates the biosynthesis of aurofusarin, a red mycelium pigment which is acting as a mycotoxin. The first step is performed by the polyketide synthase which condenses one acetyl-CoA and 6 malonyl-CoA units to form the first intermediate, the cyclic heptaketide and yellow pigment YWA1. The C2 hydroxyl group in the pyrone ring of YWA1 is probably formed during ring closure by an aldol-type cyclization reaction. The dehydratase aurZ then acts as the first tailoring enzyme in the aurofusarin biosynthetic pathway by converting YWA1 to nor-rubrofusarin. Nor-rubrofusarin is then methylated to rubrofusarin by the O-methyltransferase aurJ. Rubrofusarin is then transported across the plasma membrane by the rubrofusarin-specific pump aurT for further enzymatic processing by the extracellular complex composed of GIP1, aurF, aurO and aurS to yield aurofusarin. In Gibberella zeae (strain ATCC MYA-4620 / CBS 123657 / FGSC 9075 / NRRL 31084 / PH-1) (Wheat head blight fungus), this protein is Multicopper oxidase aurL2 (aurL2).